The primary structure comprises 219 residues: N-(5'-phosphoribosyl)anthranilate isomerase (219 aa).

Belongs to the TrpF family.

It catalyses the reaction N-(5-phospho-beta-D-ribosyl)anthranilate = 1-(2-carboxyphenylamino)-1-deoxy-D-ribulose 5-phosphate. Its pathway is amino-acid biosynthesis; L-tryptophan biosynthesis; L-tryptophan from chorismate: step 3/5. In Chloroherpeton thalassium (strain ATCC 35110 / GB-78), this protein is N-(5'-phosphoribosyl)anthranilate isomerase.